The primary structure comprises 240 residues: Glutathione S-transferase U9 (240 aa).

Residues 7–86 (NKVILHGSFA…YIDETWSNGP (80 aa)) form the GST N-terminal domain. Glutathione-binding positions include 17 to 18 (SP), 43 to 44 (NK), 57 to 58 (KI), and 70 to 71 (ES). Residues 92–226 (DPYRRSKVRF…EQILEILRAF (135 aa)) enclose the GST C-terminal domain. Position 161 is a phosphothreonine (Thr161).

This sequence belongs to the GST superfamily. Tau family.

Its subcellular location is the cytoplasm. It localises to the cytosol. It catalyses the reaction RX + glutathione = an S-substituted glutathione + a halide anion + H(+). In terms of biological role, may be involved in the conjugation of reduced glutathione to a wide number of exogenous and endogenous hydrophobic electrophiles and have a detoxification role against certain herbicides. The sequence is that of Glutathione S-transferase U9 (GSTU9) from Arabidopsis thaliana (Mouse-ear cress).